The chain runs to 57 residues: Large ribosomal subunit protein bL32c (57 aa).

Belongs to the bacterial ribosomal protein bL32 family.

The protein localises to the plastid. Its subcellular location is the chloroplast. The chain is Large ribosomal subunit protein bL32c from Liriodendron tulipifera (Tuliptree).